The chain runs to 268 residues: Type II methyltransferase M2.DpnII (268 aa).

Belongs to the N(4)/N(6)-methyltransferase family. Homodimer.

The catalysed reaction is a 2'-deoxyadenosine in DNA + S-adenosyl-L-methionine = an N(6)-methyl-2'-deoxyadenosine in DNA + S-adenosyl-L-homocysteine + H(+). Functionally, a beta subtype methylase that recognizes the single- or double-stranded sequence 5'-GATC-3', methylates A-2 on one or both strands (respectively), and protects the DNA from cleavage by the DpnII endonuclease. Further methylates DNA that is already methylated at 5'-GATC-3' sites. Essential for establishment of a previously unmethylated plasmid transformed into the cell as single-stranded DNA, enhances plasmid transfer to DpnII-containing strains of Streptococcus pneumoniae. The protein is Type II methyltransferase M2.DpnII of Streptococcus pneumoniae.